We begin with the raw amino-acid sequence, 240 residues long: tRNA (guanine-N(7)-)-methyltransferase (240 aa).

The segment covering 1–10 (MTESQDTPIT) has biased composition (polar residues). Residues 1 to 20 (MTESQDTPITTDGEARPHRR) form a disordered region. Glutamate 70, glutamate 95, aspartate 122, and aspartate 145 together coordinate S-adenosyl-L-methionine. Aspartate 145 is a catalytic residue. Substrate-binding positions include lysine 149, aspartate 181, and 218-221 (TKFE).

Belongs to the class I-like SAM-binding methyltransferase superfamily. TrmB family.

It catalyses the reaction guanosine(46) in tRNA + S-adenosyl-L-methionine = N(7)-methylguanosine(46) in tRNA + S-adenosyl-L-homocysteine. It functions in the pathway tRNA modification; N(7)-methylguanine-tRNA biosynthesis. Catalyzes the formation of N(7)-methylguanine at position 46 (m7G46) in tRNA. This chain is tRNA (guanine-N(7)-)-methyltransferase, found in Pseudomonas putida (strain W619).